The following is a 69-amino-acid chain: Beta-defensin 11 (69 aa).

Positions 1-23 (MRTLCSLLLIGCLLFSYDTPVVG) are cleaved as a signal peptide. Cystine bridges form between Cys-35–Cys-64, Cys-42–Cys-57, and Cys-47–Cys-65.

This sequence belongs to the beta-defensin family.

It localises to the secreted. Has antibacterial activity. This is Beta-defensin 11 (Defb11) from Rattus norvegicus (Rat).